The following is a 201-amino-acid chain: LexA repressor (201 aa).

The segment at residues 28–48 (LREIAAKLGISGTLGVMKHLE) is a DNA-binding region (H-T-H motif). Catalysis depends on for autocatalytic cleavage activity residues Ser120 and Lys157.

It belongs to the peptidase S24 family. Homodimer.

It catalyses the reaction Hydrolysis of Ala-|-Gly bond in repressor LexA.. Functionally, represses a number of genes involved in the response to DNA damage (SOS response), including recA and lexA. In the presence of single-stranded DNA, RecA interacts with LexA causing an autocatalytic cleavage which disrupts the DNA-binding part of LexA, leading to derepression of the SOS regulon and eventually DNA repair. The protein is LexA repressor of Geobacter sp. (strain M21).